Here is a 1564-residue protein sequence, read N- to C-terminus: ATP-dependent permease PDR10 (1564 aa).

The segment covering 1–16 (MLQAPSSSNSGLNQGN) has biased composition (polar residues). The segment at 1–37 (MLQAPSSSNSGLNQGNAAPDGPPNETQPYEGLDAAAQ) is disordered. The Cytoplasmic segment spans residues 1–587 (MLQAPSSSNS…AAIFFAILFN (587 aa)). In terms of domain architecture, ABC transporter 1 spans 174–430 (ISRRLFHRTH…FQRMGYVCPE (257 aa)). 5 consecutive transmembrane segments (helical) span residues 588 to 608 (AFSS…TEKH), 624 to 644 (TFSD…PYYF), 674 to 694 (RCIG…SVLL), 699 to 719 (MYTG…WISY), and 732 to 752 (INEF…GPNY). Asparagine 754 is a glycosylation site (N-linked (GlcNAc...) asparagine). Over residues 839 to 849 (KGIVSEKKKKN) the composition is skewed to basic residues. The tract at residues 839-872 (KGIVSEKKKKNQPTLSTSDAEKDVEMNNNSSATD) is disordered. A helical membrane pass occupies residues 841 to 861 (IVSEKKKKNQPTLSTSDAEKD). At 862–1304 (VEMNNNSSAT…IFMFTVVFNP (443 aa)) the chain is on the cytoplasmic side. In terms of domain architecture, ABC transporter 2 spans 923–1166 (FHWKNLCYDI…MINYFEAHGA (244 aa)). 959–966 (GASGAGKT) is a binding site for ATP. 6 consecutive transmembrane segments (helical) span residues 1305-1325 (ILQQ…ARER), 1340-1360 (ILVE…VYYY), 1390-1410 (VYIS…ENAA), 1426-1446 (VLAT…VSPL), 1459-1479 (ANAS…PSGM), and 1491-1511 (STGT…FCQF). Over 1512 to 1564 (SSTNDYLATVSSSYSRRWMNYGIFSAYIVFDYCAAIFLYWLVRVPKKSKKLKK) the chain is Cytoplasmic.

Belongs to the ABC transporter superfamily. ABCG family. PDR (TC 3.A.1.205) subfamily.

Its subcellular location is the membrane. This chain is ATP-dependent permease PDR10 (PDR10), found in Saccharomyces cerevisiae (strain ATCC 204508 / S288c) (Baker's yeast).